The chain runs to 196 residues: Nucleoid occlusion factor SlmA (196 aa).

Residues 7 to 68 enclose the HTH tetR-type domain; that stretch reads SNRREEILQA…GLIEFIEEAL (62 aa). Positions 31-50 form a DNA-binding region, H-T-H motif; that stretch reads TTVKLAKQVGVSEAALYRHF. The stretch at 65–142 forms a coiled coil; sequence EEALMSRINR…QLRQILRERK (78 aa).

The protein belongs to the nucleoid occlusion factor SlmA family. In terms of assembly, homodimer. Interacts with FtsZ.

The protein resides in the cytoplasm. It localises to the nucleoid. Required for nucleoid occlusion (NO) phenomenon, which prevents Z-ring formation and cell division over the nucleoid. Acts as a DNA-associated cell division inhibitor that binds simultaneously chromosomal DNA and FtsZ, and disrupts the assembly of FtsZ polymers. SlmA-DNA-binding sequences (SBS) are dispersed on non-Ter regions of the chromosome, preventing FtsZ polymerization at these regions. The sequence is that of Nucleoid occlusion factor SlmA from Vibrio atlanticus (strain LGP32) (Vibrio splendidus (strain Mel32)).